Here is a 265-residue protein sequence, read N- to C-terminus: Reduced viability upon starvation protein 161 (265 aa).

One can recognise a BAR domain in the interval 15-239; that stretch reads HSVIIKNVDK…LDQQSRDDYA (225 aa). The stretch at 126–193 forms a coiled coil; sequence YFKEIEEAIK…NQLKTELPQL (68 aa).

The protein resides in the cytoplasm. It localises to the cytoskeleton. Its function is as follows. Component of a cytoskeletal structure that is required for the formation of endocytic vesicles at the plasma membrane level. The polypeptide is Reduced viability upon starvation protein 161 (RVS161) (Saccharomyces cerevisiae (strain ATCC 204508 / S288c) (Baker's yeast)).